The chain runs to 88 residues: Bombyxin B-8 (88 aa).

A signal peptide spans 1–18; the sequence is MKTSVIFVLIVLNLMWSG. 3 cysteine pairs are disulfide-bonded: C28–C74, C40–C87, and C73–C78. A propeptide spans 47-65 (c peptide like); sequence GGAQYAPYFWQKAYLGSRG.

This sequence belongs to the insulin family. As to quaternary structure, heterodimer of a B chain and an A chain linked by two disulfide bonds.

Its subcellular location is the secreted. In terms of biological role, brain peptide responsible for activation of prothoracic glands to produce ecdysone in insects. The polypeptide is Bombyxin B-8 (BBXB8) (Bombyx mori (Silk moth)).